Reading from the N-terminus, the 357-residue chain is MTIRSYKNLNLVRANIETESRQFIENKNYSIQSIGPMPGSRAGLRVVFTRPGVNLATVDIFYNGDGSTTIQYLTGANRSLGQELADHLFETINPAEFEQVNMVLQGFVETSVLPVLELSADESHIEFREHSRNAHTVVWKIISTSYQDELTVSLHITTGKLQIQGRPLSCYRVFTFNLAALLDLQGLEKVLIRQEDGKANIVQQEVARTYLQTVMADAYPHLHVTAEKLLVSGLCVKLAAPDLPDYCMLLYPELRTIEGVLKSKMSGLGMPVQQPAGFGTYFDKPAAHYILKPQFAATLRPEQINIISTAYTFFNVERHSLFHMETVVDASRMISDMARLMGKATRAWGIIKDLYIV.

In terms of assembly, forms homodimer in solution. Forms a complex with cognate antitoxin RnlB and with enterobacteria phage T4 antitoxin Dmd.

The protein localises to the cytoplasm. Functionally, toxic component of a type II toxin-antitoxin (TA) system. A stable (half-life 27.6 minutes) endoribonuclease that in the absence of cognate antitoxin RnlB causes generalized RNA degradation. Degrades late enterobacteria phage T4 mRNAs, protecting the host against T4 reproduction. Activity is inhibited by cognate antitoxin RnlB and by enterobacteria phage T4 protein Dmd. Targets cyaA mRNA. The protein is mRNA endoribonuclease toxin LS (rnlA) of Escherichia coli (strain K12).